A 545-amino-acid polypeptide reads, in one-letter code: Phenylalanine--tRNA ligase beta subunit (545 aa).

A B5 domain is found at 268 to 343 (FLHKIQNVRE…MSIGYNNLEP (76 aa)). Residues Asp321, Asp327, Glu330, and Asp331 each coordinate Mg(2+).

Belongs to the phenylalanyl-tRNA synthetase beta subunit family. Type 2 subfamily. In terms of assembly, tetramer of two alpha and two beta subunits. It depends on Mg(2+) as a cofactor.

The protein resides in the cytoplasm. The catalysed reaction is tRNA(Phe) + L-phenylalanine + ATP = L-phenylalanyl-tRNA(Phe) + AMP + diphosphate + H(+). The protein is Phenylalanine--tRNA ligase beta subunit of Saccharolobus islandicus (strain M.14.25 / Kamchatka #1) (Sulfolobus islandicus).